The primary structure comprises 352 residues: MNYKIVSIPGDGIGTEVVAGAVAVLRQLEKKYGFTVEIEEHLFGGASYDVHGEMLTDATLEACKNCDAVLLGAVGGPKWENLPHEHKPEAALLKIRKELGLFANLRPAKVYDALVDASSLKADVVRGTDFVVFRELTGGIYFGQPRGYDENKGWNTMVYEKYEVERIARLAFEAARQRQGRVMSIDKANVLEVSQLWRNVVHAVHADYQDVELSDMYVDNAAMQIVRNPKQFDVIVTGNLFGDILSDISGMITGSLGMLPSASIGSKHALYEPIHGSAPDIAGQNKANPIATIASVAMMFEHSFKRTDIARDIEQAIEAALATGVRTADIAAAGDTAVSTTAMTEAIISQLK.

76 to 89 is a binding site for NAD(+); the sequence is GPKWENLPHEHKPE. Residues Arg96, Arg106, Arg134, and Asp219 each coordinate substrate. Asp219, Asp243, and Asp247 together coordinate Mg(2+). 276-288 lines the NAD(+) pocket; that stretch reads GSAPDIAGQNKAN.

The protein belongs to the isocitrate and isopropylmalate dehydrogenases family. LeuB type 1 subfamily. As to quaternary structure, homodimer. Mg(2+) serves as cofactor. It depends on Mn(2+) as a cofactor.

It localises to the cytoplasm. It carries out the reaction (2R,3S)-3-isopropylmalate + NAD(+) = 4-methyl-2-oxopentanoate + CO2 + NADH. It participates in amino-acid biosynthesis; L-leucine biosynthesis; L-leucine from 3-methyl-2-oxobutanoate: step 3/4. Its function is as follows. Catalyzes the oxidation of 3-carboxy-2-hydroxy-4-methylpentanoate (3-isopropylmalate) to 3-carboxy-4-methyl-2-oxopentanoate. The product decarboxylates to 4-methyl-2 oxopentanoate. The chain is 3-isopropylmalate dehydrogenase from Chlorobium chlorochromatii (strain CaD3).